We begin with the raw amino-acid sequence, 307 residues long: MGRLSKLRIVDPVLTNLAIGYTNAEFIGQSLMPVVEVEKEGGKIPKFGKESFRLYKTERALRARSNRMNPEDLGSIDIVLDEHDLEYPIDYREDQESAFPLEQAAVQTATEAIQLRREKMVADLAQNPNSYAGGNKKQLSATEKFTAAGSDPVGVIEDGKEAIRTKIGRRPNTMVIGASAYKTLKAHPQLIEKIKYSMKGIVTVDLLKEIFEVENIAVGEAIYADDKDRFTDIWGANIVLAYVPLQRGGQQRTPYEPSYGYTLRKKGNPVVDTRIEDGKLELVRSTDIFRPYLLGADAGYLISGING.

Belongs to the lambda phage major capsid protein family.

The protein localises to the virion. Its subcellular location is the host cytoplasm. Functionally, assembles to form an icosahedral capsid. This Burkholderia cenocepacia (strain ATCC BAA-245 / DSM 16553 / LMG 16656 / NCTC 13227 / J2315 / CF5610) (Burkholderia cepacia (strain J2315)) protein is Major capsid protein.